Consider the following 945-residue polypeptide: Kinesin-like protein KIN-7F (945 aa).

Positions 34–356 (RILVSVRLRP…LLFASCAKEV (323 aa)) constitute a Kinesin motor domain. 120–127 (GQTSSGKT) provides a ligand contact to ATP. Residues 365–437 (VMSDKALVKQ…QDLLQVVGDN (73 aa)) are a coiled coil. Disordered stretches follow at residues 484 to 512 (RRVA…SVSS) and 553 to 588 (NECL…MNSR). Composition is skewed to polar residues over residues 495–512 (QAEN…SVSS) and 560–587 (AVGS…SMNS).

The protein belongs to the TRAFAC class myosin-kinesin ATPase superfamily. Kinesin family. KIN-7 subfamily. As to quaternary structure, binds microtubules.

Binds ATP/ADP in vitro. Possesses low ATPase activity but high affinity for microtubules. The sequence is that of Kinesin-like protein KIN-7F from Oryza sativa subsp. japonica (Rice).